Here is a 122-residue protein sequence, read N- to C-terminus: Large ribosomal subunit protein bL12 (122 aa).

The protein belongs to the bacterial ribosomal protein bL12 family. In terms of assembly, homodimer. Part of the ribosomal stalk of the 50S ribosomal subunit. Forms a multimeric L10(L12)X complex, where L10 forms an elongated spine to which 2 to 4 L12 dimers bind in a sequential fashion. Binds GTP-bound translation factors.

Its function is as follows. Forms part of the ribosomal stalk which helps the ribosome interact with GTP-bound translation factors. Is thus essential for accurate translation. The protein is Large ribosomal subunit protein bL12 of Xanthomonas oryzae pv. oryzae (strain MAFF 311018).